The chain runs to 320 residues: Acetyl-coenzyme A carboxylase carboxyl transferase subunit alpha (320 aa).

The CoA carboxyltransferase C-terminal domain maps to 41-295 (SIEEKAAQAL…GDAIAGALND (255 aa)).

Belongs to the AccA family. Acetyl-CoA carboxylase is a heterohexamer composed of biotin carboxyl carrier protein (AccB), biotin carboxylase (AccC) and two subunits each of ACCase subunit alpha (AccA) and ACCase subunit beta (AccD).

The protein resides in the cytoplasm. The catalysed reaction is N(6)-carboxybiotinyl-L-lysyl-[protein] + acetyl-CoA = N(6)-biotinyl-L-lysyl-[protein] + malonyl-CoA. It functions in the pathway lipid metabolism; malonyl-CoA biosynthesis; malonyl-CoA from acetyl-CoA: step 1/1. Its function is as follows. Component of the acetyl coenzyme A carboxylase (ACC) complex. First, biotin carboxylase catalyzes the carboxylation of biotin on its carrier protein (BCCP) and then the CO(2) group is transferred by the carboxyltransferase to acetyl-CoA to form malonyl-CoA. This Nitrobacter winogradskyi (strain ATCC 25391 / DSM 10237 / CIP 104748 / NCIMB 11846 / Nb-255) protein is Acetyl-coenzyme A carboxylase carboxyl transferase subunit alpha.